Reading from the N-terminus, the 427-residue chain is Glutamate-1-semialdehyde 2,1-aminomutase 1 (427 aa).

Lys-265 carries the N6-(pyridoxal phosphate)lysine modification.

Belongs to the class-III pyridoxal-phosphate-dependent aminotransferase family. HemL subfamily. As to quaternary structure, homodimer. The cofactor is pyridoxal 5'-phosphate.

It localises to the cytoplasm. The catalysed reaction is (S)-4-amino-5-oxopentanoate = 5-aminolevulinate. It participates in porphyrin-containing compound metabolism; protoporphyrin-IX biosynthesis; 5-aminolevulinate from L-glutamyl-tRNA(Glu): step 2/2. The protein is Glutamate-1-semialdehyde 2,1-aminomutase 1 of Lachnoclostridium phytofermentans (strain ATCC 700394 / DSM 18823 / ISDg) (Clostridium phytofermentans).